We begin with the raw amino-acid sequence, 294 residues long: Elongation factor Ts (294 aa).

Residues 81–84 (TDFV) are involved in Mg(2+) ion dislocation from EF-Tu.

It belongs to the EF-Ts family.

Its subcellular location is the cytoplasm. In terms of biological role, associates with the EF-Tu.GDP complex and induces the exchange of GDP to GTP. It remains bound to the aminoacyl-tRNA.EF-Tu.GTP complex up to the GTP hydrolysis stage on the ribosome. This is Elongation factor Ts from Levilactobacillus brevis (strain ATCC 367 / BCRC 12310 / CIP 105137 / JCM 1170 / LMG 11437 / NCIMB 947 / NCTC 947) (Lactobacillus brevis).